Reading from the N-terminus, the 492-residue chain is NADH-quinone oxidoreductase subunit N (492 aa).

14 consecutive transmembrane segments (helical) span residues 5-25, 37-57, 72-92, 104-124, 129-149, 164-184, 205-225, 239-259, 276-295, 302-322, 337-357, 380-400, 414-434, and 466-486; these read PMTA…AWLI, TYFI…IDAL, VVDP…AVSI, LYEG…LVMI, FLTL…AIAL, YVLG…LYGA, VVLL…MGAV, PTAM…AWGL, MLVI…GIVQ, LAYS…AGVV, MFYS…VMLL, FAFV…AVGF, GLTW…FYYL, and VAVL…LNAI.

This sequence belongs to the complex I subunit 2 family. NDH-1 is composed of 14 different subunits. Subunits NuoA, H, J, K, L, M, N constitute the membrane sector of the complex.

It is found in the cell inner membrane. It carries out the reaction a quinone + NADH + 5 H(+)(in) = a quinol + NAD(+) + 4 H(+)(out). In terms of biological role, NDH-1 shuttles electrons from NADH, via FMN and iron-sulfur (Fe-S) centers, to quinones in the respiratory chain. The immediate electron acceptor for the enzyme in this species is believed to be ubiquinone. Couples the redox reaction to proton translocation (for every two electrons transferred, four hydrogen ions are translocated across the cytoplasmic membrane), and thus conserves the redox energy in a proton gradient. This chain is NADH-quinone oxidoreductase subunit N, found in Paraburkholderia phymatum (strain DSM 17167 / CIP 108236 / LMG 21445 / STM815) (Burkholderia phymatum).